We begin with the raw amino-acid sequence, 441 residues long: Enolase (441 aa).

A (2R)-2-phosphoglycerate-binding site is contributed by glutamine 163. The Proton donor role is filled by glutamate 205. Residues aspartate 242, glutamate 288, and aspartate 315 each coordinate Mg(2+). Positions 340, 369, 370, and 391 each coordinate (2R)-2-phosphoglycerate. Residue lysine 340 is the Proton acceptor of the active site.

Belongs to the enolase family. Mg(2+) is required as a cofactor.

The protein resides in the cytoplasm. Its subcellular location is the secreted. The protein localises to the cell surface. The enzyme catalyses (2R)-2-phosphoglycerate = phosphoenolpyruvate + H2O. The protein operates within carbohydrate degradation; glycolysis; pyruvate from D-glyceraldehyde 3-phosphate: step 4/5. Catalyzes the reversible conversion of 2-phosphoglycerate (2-PG) into phosphoenolpyruvate (PEP). It is essential for the degradation of carbohydrates via glycolysis. This is Enolase from Ligilactobacillus salivarius (strain UCC118) (Lactobacillus salivarius).